The sequence spans 548 residues: Chaperonin GroEL (548 aa).

Residues 30 to 33 (TLGP), Lys-51, 87 to 91 (DGTTT), Gly-415, and Asp-495 contribute to the ATP site.

This sequence belongs to the chaperonin (HSP60) family. As to quaternary structure, forms a cylinder of 14 subunits composed of two heptameric rings stacked back-to-back. Interacts with the co-chaperonin GroES.

The protein resides in the cytoplasm. The catalysed reaction is ATP + H2O + a folded polypeptide = ADP + phosphate + an unfolded polypeptide.. Its function is as follows. Together with its co-chaperonin GroES, plays an essential role in assisting protein folding. The GroEL-GroES system forms a nano-cage that allows encapsulation of the non-native substrate proteins and provides a physical environment optimized to promote and accelerate protein folding. The protein is Chaperonin GroEL of Photorhabdus laumondii subsp. laumondii (strain DSM 15139 / CIP 105565 / TT01) (Photorhabdus luminescens subsp. laumondii).